We begin with the raw amino-acid sequence, 227 residues long: tRNA (guanine-N(1)-)-methyltransferase (227 aa).

S-adenosyl-L-methionine is bound by residues glycine 107 and 127–132 (LGDFIL).

It belongs to the RNA methyltransferase TrmD family. As to quaternary structure, homodimer.

The protein localises to the cytoplasm. It catalyses the reaction guanosine(37) in tRNA + S-adenosyl-L-methionine = N(1)-methylguanosine(37) in tRNA + S-adenosyl-L-homocysteine + H(+). Its function is as follows. Specifically methylates guanosine-37 in various tRNAs. This Mesomycoplasma hyopneumoniae (strain 7448) (Mycoplasma hyopneumoniae) protein is tRNA (guanine-N(1)-)-methyltransferase.